Reading from the N-terminus, the 367-residue chain is Ribosomal RNA large subunit methyltransferase M (367 aa).

Residues Ser-189, 222-225, Asp-241, Asp-261, and Asp-278 contribute to the S-adenosyl-L-methionine site; that span reads CPGG. Lys-307 (proton acceptor) is an active-site residue.

Belongs to the class I-like SAM-binding methyltransferase superfamily. RNA methyltransferase RlmE family. RlmM subfamily. As to quaternary structure, monomer.

The protein localises to the cytoplasm. The catalysed reaction is cytidine(2498) in 23S rRNA + S-adenosyl-L-methionine = 2'-O-methylcytidine(2498) in 23S rRNA + S-adenosyl-L-homocysteine + H(+). Functionally, catalyzes the 2'-O-methylation at nucleotide C2498 in 23S rRNA. This chain is Ribosomal RNA large subunit methyltransferase M, found in Shewanella denitrificans (strain OS217 / ATCC BAA-1090 / DSM 15013).